Here is a 954-residue protein sequence, read N- to C-terminus: Glycine dehydrogenase (decarboxylating) (954 aa).

Over residues 1–13 (MTELLQSLSTQNE) the composition is skewed to polar residues. Residues 1–24 (MTELLQSLSTQNEFVARHNGPNKS) form a disordered region. The residue at position 704 (K704) is an N6-(pyridoxal phosphate)lysine.

It belongs to the GcvP family. The glycine cleavage system is composed of four proteins: P, T, L and H. Pyridoxal 5'-phosphate serves as cofactor.

It carries out the reaction N(6)-[(R)-lipoyl]-L-lysyl-[glycine-cleavage complex H protein] + glycine + H(+) = N(6)-[(R)-S(8)-aminomethyldihydrolipoyl]-L-lysyl-[glycine-cleavage complex H protein] + CO2. Functionally, the glycine cleavage system catalyzes the degradation of glycine. The P protein binds the alpha-amino group of glycine through its pyridoxal phosphate cofactor; CO(2) is released and the remaining methylamine moiety is then transferred to the lipoamide cofactor of the H protein. The sequence is that of Glycine dehydrogenase (decarboxylating) from Vibrio campbellii (strain ATCC BAA-1116).